The primary structure comprises 176 residues: uncharacterized protein (176 aa).

The signal sequence occupies residues Met-1–Ser-22. Residues Cys-38 and Cys-78 are joined by a disulfide bond.

The protein belongs to the fimbrial protein family.

It is found in the fimbrium. This is an uncharacterized protein from Escherichia coli (strain K12).